We begin with the raw amino-acid sequence, 149 residues long: 3-dehydroquinate dehydratase (149 aa).

Tyrosine 26 (proton acceptor) is an active-site residue. Residues asparagine 77, histidine 83, and aspartate 90 each coordinate substrate. The Proton donor role is filled by histidine 103. Residues 104–105 (LS) and arginine 114 each bind substrate.

Belongs to the type-II 3-dehydroquinase family. As to quaternary structure, homododecamer.

It carries out the reaction 3-dehydroquinate = 3-dehydroshikimate + H2O. It participates in metabolic intermediate biosynthesis; chorismate biosynthesis; chorismate from D-erythrose 4-phosphate and phosphoenolpyruvate: step 3/7. Functionally, catalyzes a trans-dehydration via an enolate intermediate. This Haemophilus influenzae (strain 86-028NP) protein is 3-dehydroquinate dehydratase.